The following is a 385-amino-acid chain: Putative cell agglutination protein pfl8 (385 aa).

Positions 1 to 20 (MNSYISLIFTLLFFTSAARS) are cleaved as a signal peptide. The segment at 41–90 (SSEFTSTITPETPSSSSSTFVPISTHTSSATNTTSGQLSISSSSSTSSEY) is disordered. 3 N-linked (GlcNAc...) asparagine glycosylation sites follow: asparagine 72, asparagine 270, and asparagine 346. Residues 196 to 360 (EVSTFNKPAY…GPVRTTSYSY (165 aa)) enclose the PA14 domain.

Its subcellular location is the secreted. It is found in the cell surface. May be involved in agglutination during conjugation or other aspects of colony formation. Induces flocculation when overexpressed. This Schizosaccharomyces pombe (strain 972 / ATCC 24843) (Fission yeast) protein is Putative cell agglutination protein pfl8.